Reading from the N-terminus, the 131-residue chain is Global transcriptional regulator Spx 2 (131 aa).

Cys10 and Cys13 are joined by a disulfide.

It belongs to the ArsC family. Spx subfamily. Interacts with the C-terminal domain of the alpha subunit of the RNAP.

The protein resides in the cytoplasm. Global transcriptional regulator that plays a key role in stress response and exerts either positive or negative regulation of genes. Acts by interacting with the C-terminal domain of the alpha subunit of the RNA polymerase (RNAP). This interaction can enhance binding of RNAP to the promoter region of target genes and stimulate their transcription, or block interaction of RNAP with activator. The chain is Global transcriptional regulator Spx 2 from Bacillus cereus (strain ATCC 14579 / DSM 31 / CCUG 7414 / JCM 2152 / NBRC 15305 / NCIMB 9373 / NCTC 2599 / NRRL B-3711).